A 363-amino-acid chain; its full sequence is Chorismate synthase (363 aa).

Residues arginine 48 and arginine 54 each contribute to the NADP(+) site. FMN-binding positions include 125-127, 237-238, glycine 277, 292-296, and arginine 318; these read RSS, NA, and KPTSS.

The protein belongs to the chorismate synthase family. As to quaternary structure, homotetramer. FMNH2 serves as cofactor.

It carries out the reaction 5-O-(1-carboxyvinyl)-3-phosphoshikimate = chorismate + phosphate. The protein operates within metabolic intermediate biosynthesis; chorismate biosynthesis; chorismate from D-erythrose 4-phosphate and phosphoenolpyruvate: step 7/7. Its function is as follows. Catalyzes the anti-1,4-elimination of the C-3 phosphate and the C-6 proR hydrogen from 5-enolpyruvylshikimate-3-phosphate (EPSP) to yield chorismate, which is the branch point compound that serves as the starting substrate for the three terminal pathways of aromatic amino acid biosynthesis. This reaction introduces a second double bond into the aromatic ring system. This is Chorismate synthase from Pseudomonas putida (strain ATCC 700007 / DSM 6899 / JCM 31910 / BCRC 17059 / LMG 24140 / F1).